The following is a 236-amino-acid chain: Phosphoribosylformylglycinamidine synthase subunit PurQ (236 aa).

One can recognise a Glutamine amidotransferase type-1 domain in the interval 3–234 (FGVIVFPGSN…VDWWERGERL (232 aa)). Catalysis depends on Cys86, which acts as the Nucleophile. Residues His203 and Glu205 contribute to the active site.

Part of the FGAM synthase complex composed of 1 PurL, 1 PurQ and 2 PurS subunits.

Its subcellular location is the cytoplasm. The catalysed reaction is N(2)-formyl-N(1)-(5-phospho-beta-D-ribosyl)glycinamide + L-glutamine + ATP + H2O = 2-formamido-N(1)-(5-O-phospho-beta-D-ribosyl)acetamidine + L-glutamate + ADP + phosphate + H(+). It catalyses the reaction L-glutamine + H2O = L-glutamate + NH4(+). Its pathway is purine metabolism; IMP biosynthesis via de novo pathway; 5-amino-1-(5-phospho-D-ribosyl)imidazole from N(2)-formyl-N(1)-(5-phospho-D-ribosyl)glycinamide: step 1/2. In terms of biological role, part of the phosphoribosylformylglycinamidine synthase complex involved in the purines biosynthetic pathway. Catalyzes the ATP-dependent conversion of formylglycinamide ribonucleotide (FGAR) and glutamine to yield formylglycinamidine ribonucleotide (FGAM) and glutamate. The FGAM synthase complex is composed of three subunits. PurQ produces an ammonia molecule by converting glutamine to glutamate. PurL transfers the ammonia molecule to FGAR to form FGAM in an ATP-dependent manner. PurS interacts with PurQ and PurL and is thought to assist in the transfer of the ammonia molecule from PurQ to PurL. In Moorella thermoacetica (strain ATCC 39073 / JCM 9320), this protein is Phosphoribosylformylglycinamidine synthase subunit PurQ.